Here is a 1047-residue protein sequence, read N- to C-terminus: Exportin-6 (1047 aa).

The 67-residue stretch at 32-98 (IDTILNNYKA…KGLLLDIYLN (67 aa)) folds into the Importin N-terminal domain.

It belongs to the exportin family.

It localises to the nucleus. The protein resides in the cytoplasm. Functionally, probably mediates the nuclear export of actin and profilin-actin complexes. This Dictyostelium discoideum (Social amoeba) protein is Exportin-6 (xpo6).